We begin with the raw amino-acid sequence, 368 residues long: MVLEVSDHQVLNDAEVAALLENFSSSYDYGENESDSCCTSPPCPQDFSLNFDRAFLPALYSLLFLLGLLGNGAVAAVLLSRRTALSSTDTFLLHLAVADTLLVLTLPLWAVDAAVQWVFGSGLCKVAGALFNINFYAGALLLACISFDRYLNIVHATQLYRRGPPARVTLTCLAVWGLCLLFALPDFIFLSAHHDERLNATHCQYNFPQVGRTALRVLQLVAGFLLPLLVMAYCYAHILAVLLVSRGQRRLRAMRLVVVVVVAFALCWTPYHLVVLVDILMDLGALARNCGRESRVDVAKSVTSGLGYMHCCLNPLLYAFVGVKFRERMWMLLLRLGCPNQRGLQRQPSSSRRDSSWSETSEASYSGL.

Residues 1-53 are Extracellular-facing; the sequence is MVLEVSDHQVLNDAEVAALLENFSSSYDYGENESDSCCTSPPCPQDFSLNFDR. N-linked (GlcNAc...) asparagine glycosylation occurs at Asn22. Residues Tyr27 and Tyr29 each carry the sulfotyrosine modification. N-linked (GlcNAc...) asparagine glycosylation occurs at Asn32. A helical transmembrane segment spans residues 54–80; sequence AFLPALYSLLFLLGLLGNGAVAAVLLS. The Cytoplasmic portion of the chain corresponds to 81 to 89; sequence RRTALSSTD. Residues 90 to 110 form a helical membrane-spanning segment; sequence TFLLHLAVADTLLVLTLPLWA. The Extracellular segment spans residues 111–125; the sequence is VDAAVQWVFGSGLCK. Cys124 and Cys203 form a disulfide bridge. A helical transmembrane segment spans residues 126–147; sequence VAGALFNINFYAGALLLACISF. Residues 148 to 169 are Cytoplasmic-facing; that stretch reads DRYLNIVHATQLYRRGPPARVT. A helical membrane pass occupies residues 170-189; it reads LTCLAVWGLCLLFALPDFIF. The Extracellular portion of the chain corresponds to 190 to 212; the sequence is LSAHHDERLNATHCQYNFPQVGR. The helical transmembrane segment at 213–233 threads the bilayer; the sequence is TALRVLQLVAGFLLPLLVMAY. Residues 234 to 255 lie on the Cytoplasmic side of the membrane; it reads CYAHILAVLLVSRGQRRLRAMR. Residues 256–277 form a helical membrane-spanning segment; the sequence is LVVVVVVAFALCWTPYHLVVLV. Over 278–298 the chain is Extracellular; that stretch reads DILMDLGALARNCGRESRVDV. Residues 299 to 321 form a helical membrane-spanning segment; sequence AKSVTSGLGYMHCCLNPLLYAFV. The Cytoplasmic portion of the chain corresponds to 322–368; it reads GVKFRERMWMLLLRLGCPNQRGLQRQPSSSRRDSSWSETSEASYSGL. A disordered region spans residues 342 to 368; it reads RGLQRQPSSSRRDSSWSETSEASYSGL. The segment covering 357–368 has biased composition (low complexity); it reads WSETSEASYSGL.

The protein belongs to the G-protein coupled receptor 1 family. Homomer. Forms heteromers with ACKR4. As to quaternary structure, interacts with PF4/CXCL4. Sulfation on Tyr-27 and Tyr-29 is essential for CXCL10 binding and subsequent signal transduction induction. Post-translationally, N-glycosylated. In terms of tissue distribution, isoform 1 and isoform 2 are mainly expressed in heart, kidney, liver and skeletal muscle. Isoform 1 is also expressed in placenta. Isoform 2 is expressed in endothelial cells. Expressed in T-cells (at protein level).

It localises to the cell membrane. Functionally, receptor for the C-X-C chemokine CXCL9, CXCL10 and CXCL11 and mediates the proliferation, survival and angiogenic activity of human mesangial cells (HMC) through a heterotrimeric G-protein signaling pathway. Binds to CCL21. Probably promotes cell chemotaxis response. Upon activation by PF4, induces activated T-lymphocytes migration mediated via downstream Ras/extracellular signal-regulated kinase (ERK) signaling. Its function is as follows. Receptor for the C-X-C chemokine CXCL4 and also mediates the inhibitory activities of CXCL9, CXCL10 and CXCL11 on the proliferation, survival and angiogenic activity of human microvascular endothelial cells (HMVEC) through a cAMP-mediated signaling pathway. Does not promote cell chemotaxis respons. Interaction with CXCL4 or CXCL10 leads to activation of the p38MAPK pathway and contributes to inhibition of angiogenesis. Overexpression in renal cancer cells down-regulates expression of the anti-apoptotic protein HMOX1 and promotes apoptosis. In terms of biological role, mediates the activity of CXCL11. This chain is C-X-C chemokine receptor type 3 (CXCR3), found in Homo sapiens (Human).